A 186-amino-acid chain; its full sequence is Elongation factor P (186 aa).

The protein belongs to the elongation factor P family.

The protein localises to the cytoplasm. It functions in the pathway protein biosynthesis; polypeptide chain elongation. Its function is as follows. Involved in peptide bond synthesis. Stimulates efficient translation and peptide-bond synthesis on native or reconstituted 70S ribosomes in vitro. Probably functions indirectly by altering the affinity of the ribosome for aminoacyl-tRNA, thus increasing their reactivity as acceptors for peptidyl transferase. This is Elongation factor P from Pelagibacter ubique (strain HTCC1062).